Consider the following 1256-residue polypeptide: Octopamine receptor beta-3R (1256 aa).

Residues 1–143 (MSGVNVADLL…LDLSLLLLKG (143 aa)) lie on the Extracellular side of the membrane. N-linked (GlcNAc...) asparagine glycans are attached at residues Asn-36, Asn-113, and Asn-117. Residues 144–164 (FIFSSIILAAVLGNALVIISV) traverse the membrane as a helical segment. Topologically, residues 165 to 171 (QRNRKLR) are cytoplasmic. The chain crosses the membrane as a helical span at residues 172-192 (VITNYFVVSLAMADMLVALCA). The Extracellular segment spans residues 193–213 (MTFNASVELSGGKWMFGPFMC). Asn-196 carries N-linked (GlcNAc...) asparagine glycosylation. Residues 214–236 (NVYNSLDVYFSTASILHLCCISV) traverse the membrane as a helical segment. Over 237–258 (DRYYAIVRPLEYPLNMTHKTVC) the chain is Cytoplasmic. A helical membrane pass occupies residues 259-279 (FMLANVWILPALISFTPIFLG). Residues 280–305 (WYTTEEHLREISLHPDQCSFVVNKAY) are Extracellular-facing. A helical transmembrane segment spans residues 306–326 (ALISSSVSFWIPGIVMLVMYW). Residues 327–1169 (RIFKEAIRQR…WKAEHKAART (843 aa)) lie on the Cytoplasmic side of the membrane. 5 disordered regions span residues 377–427 (AREE…DLRD), 480–512 (ELDK…ESTA), 665–698 (LSHS…NKPD), 751–774 (GESP…EPSG), and 1087–1117 (DTTV…SSTR). Residues 396 to 406 (TDEDDDRDECD) show a composition bias toward acidic residues. Polar residues predominate over residues 489–498 (NGPQQQLSLT). Positions 757-770 (PATPPPSLSPPELP) are enriched in pro residues. Residues 1170 to 1190 (LGIIMGVFLLCWLPFFLWYVI) form a helical membrane-spanning segment. Topologically, residues 1191-1202 (TSLCGPACPCPD) are extracellular. The chain crosses the membrane as a helical span at residues 1203-1223 (VLVVVLFWIGYFNSTLNPLIY). Residues 1224-1256 (AYFNRDFREAFRNTLECVLPCLEKRNPYNAYYV) lie on the Cytoplasmic side of the membrane.

Belongs to the G-protein coupled receptor 1 family. In terms of tissue distribution, in the adult, expressed in the inferior and superior protocerebrum, the posterior lateral protocerebrum, the deutocerebrum, the surface of the subesophageal ganglion, the lateral cell body region, the cortical layer of the ventral nerve cord and the optic lobe medulla of the central nervous system (CNS). Also expressed in the nurse cells and follicle cells of the egg chambers in the ovary at oogenic stages 1-10, and spermatogonia and spermatocytes in the testis. Expressed ubiquitously in the embryonic CNS. In larvae, expressed in the ventral cortical layer of the ventral nerve cord, the cortical layer of the brain lobes, salivary glands, midgut, imaginal disks and developing reproductive organs. Expressed in the larval prothoracic gland with weak expression in other regions of the ring gland.

The protein resides in the cell membrane. Functionally, autoreceptor for octopamine, which is a neurotransmitter, neurohormone, and neuromodulator in invertebrates. Probably also acts as a receptor for tyramine during ecdysone biosynthesis. Required for the biosynthesis of the steroid hormone ecdysone which is necessary for metamorphosis. Involved in activation of prothoracicotropic hormone and insulin-like peptide signaling which is required for the expression of ecdysone biosynthetic genes. The protein is Octopamine receptor beta-3R of Drosophila melanogaster (Fruit fly).